A 241-amino-acid chain; its full sequence is MKILLVFDFDNTIIDDNSDTWIVQCAPEKKLPLELKDSYKKGFWTEFMGRVFKYLGDEGVREDEMKRAMISMPFTPGMVELLNFIRKNKNKFDCIIISDSNSVFIDWVLEATNFHDVFDKVFTNPAAFDSNGHLTVEKHHTHSCTRCPQNLCKNVVLVEFVGEQLQQGVNYTRIVYIGDGGNDVCPVTFLKKNDIAMPRKGYALQKTLYRMCQNLEPMESSVVSWSSGVEIISYLQFLIKE.

D8 functions as the Nucleophile in the catalytic mechanism. Positions 8 and 10 each coordinate Mg(2+). The active-site Proton donor is the D10. Substrate-binding residues include D19 and D99. Mg(2+) is bound at residue D179.

This sequence belongs to the HAD-like hydrolase superfamily. PHOSPHO family. Requires Mg(2+) as cofactor.

The catalysed reaction is pyridoxal 5'-phosphate + H2O = pyridoxal + phosphate. In terms of biological role, phosphatase that has high activity toward pyridoxal 5'-phosphate (PLP). Also active at much lower level toward pyrophosphate, phosphoethanolamine (PEA), phosphocholine (PCho), phospho-l-tyrosine, fructose-6-phosphate, p-nitrophenyl phosphate, and h-glycerophosphate. In Bos taurus (Bovine), this protein is Pyridoxal phosphate phosphatase PHOSPHO2 (PHOSPHO2).